The sequence spans 252 residues: Enolase-phosphatase E1 (252 aa).

Asp-14 and Glu-16 together coordinate Mg(2+). Residues 142–143 (SS) and Lys-176 each bind substrate. Residue Asp-201 participates in Mg(2+) binding.

The protein belongs to the HAD-like hydrolase superfamily. MasA/MtnC family. In terms of assembly, monomer. Mg(2+) serves as cofactor.

It is found in the cytoplasm. Its subcellular location is the nucleus. The enzyme catalyses 5-methylsulfanyl-2,3-dioxopentyl phosphate + H2O = 1,2-dihydroxy-5-(methylsulfanyl)pent-1-en-3-one + phosphate. The protein operates within amino-acid biosynthesis; L-methionine biosynthesis via salvage pathway; L-methionine from S-methyl-5-thio-alpha-D-ribose 1-phosphate: step 3/6. It participates in amino-acid biosynthesis; L-methionine biosynthesis via salvage pathway; L-methionine from S-methyl-5-thio-alpha-D-ribose 1-phosphate: step 4/6. Bifunctional enzyme that catalyzes the enolization of 2,3-diketo-5-methylthiopentyl-1-phosphate (DK-MTP-1-P) into the intermediate 2-hydroxy-3-keto-5-methylthiopentenyl-1-phosphate (HK-MTPenyl-1-P), which is then dephosphorylated to form the acireductone 1,2-dihydroxy-3-keto-5-methylthiopentene (DHK-MTPene). The chain is Enolase-phosphatase E1 from Drosophila ananassae (Fruit fly).